Consider the following 671-residue polypeptide: cGMP-dependent protein kinase 1 (671 aa).

Residue serine 2 is modified to N-acetylserine. Positions 2–59 (SELEEDFAKILMLKEERIKELEKRLSEKEEEIQELKRKLHKCQSVLPVPSTHIGPRTT) form a coiled coil. The required for dimerization stretch occupies residues 2-102 (SELEEDFAKI…LIKEAILDND (101 aa)). The leucine-zipper stretch occupies residues 9-44 (AKILMLKEERIKELEKRLSEKEEEIQELKRKLHKCQ). The segment at 50–75 (PSTHIGPRTTRAQGISAEPQTYRSFH) is autoinhibitory domain. The residue at position 59 (threonine 59) is a Phosphothreonine; by autocatalysis. Positions 103–220 (FMKNLELSQI…EYMEFLKSVP (118 aa)) are cGMP-binding, high affinity. 3',5'-cyclic GMP contacts are provided by residues 167-170 (GELA), 177-178 (RT), arginine 282, 291-294 (GEKA), 301-302 (RT), and tyrosine 336. The interval 221–341 (TFQSLPDEIL…SNKAYEDAEA (121 aa)) is cGMP-binding, low affinity. The region spanning 360-619 (FNIIDTLGVG…VKDIQKHKWF (260 aa)) is the Protein kinase domain. Residues 366–374 (LGVGGFGRV) and lysine 390 contribute to the ATP site. Catalysis depends on aspartate 484, which acts as the Proton acceptor. Threonine 515 is modified (phosphothreonine). Residues 620–671 (EGFNWEGLRKGTLTPPIIPSVASPTDTSNFDSFPEDSDEPPPDDNSGWDIDF) enclose the AGC-kinase C-terminal domain. The disordered stretch occupies residues 635–671 (PIIPSVASPTDTSNFDSFPEDSDEPPPDDNSGWDIDF). The segment covering 652 to 661 (FPEDSDEPPP) has biased composition (acidic residues).

Belongs to the protein kinase superfamily. AGC Ser/Thr protein kinase family. cGMP subfamily. Isoform alpha: parallel homodimer or heterodimer and also heterotetramer. Interacts directly with PPP1R12A. Non-covalent dimer of dimer of PRKG1-PRKG1 and PPP1R12A-PPP1R12A. This interaction targets PRKG1 to stress fibers to mediate smooth muscle cell relaxation and vasodilation in responses to rises in cGMP. Isoform beta: antiparallel homodimer. Part of cGMP kinase signaling complex at least composed of ACTA2/alpha-actin, CNN1/calponin H1, PLN/phospholamban, PRKG1 and ITPR1. Interacts with IRAG1. Forms a stable complex with ITPR1, IRAG1, and isoform beta of PRKG1. Interacts with TRPC7 (via ankyrin repeat domain). Isoform alpha interacts with RGS2. Interacts with GTF2I. In terms of processing, autophosphorylation increases kinase activity. 65 kDa monomer is produced by proteolytic cleavage. In terms of tissue distribution, detected in cerebellum, hippocampus, dorsomedial hypothalamus, medulla, subcommissural organ, cerebral cortex, amygdala, habenulae, various hypothalamic regions, olfactory bulb, pituitary gland, and retina. Isoform alpha is prominent in the cerebellum and medulla, whereas isoform Beta is predominant in the cortex, hippocampus, hypothalamus, and olfactory bulb.

Its subcellular location is the cytoplasm. The enzyme catalyses L-seryl-[protein] + ATP = O-phospho-L-seryl-[protein] + ADP + H(+). The catalysed reaction is L-threonyl-[protein] + ATP = O-phospho-L-threonyl-[protein] + ADP + H(+). Its activity is regulated as follows. In the absence of cGMP, PRKG1 activity is suppressed by autoinhibitory contacts. Serine/threonine protein kinase that acts as a key mediator of the nitric oxide (NO)/cGMP signaling pathway. GMP binding activates PRKG1, which phosphorylates serines and threonines on many cellular proteins. Numerous protein targets for PRKG1 phosphorylation are implicated in modulating cellular calcium, but the contribution of each of these targets may vary substantially among cell types. Proteins that are phosphorylated by PRKG1 regulate platelet activation and adhesion, smooth muscle contraction, cardiac function, gene expression, feedback of the NO-signaling pathway, and other processes involved in several aspects of the CNS like axon guidance, hippocampal and cerebellar learning, circadian rhythm and nociception. Smooth muscle relaxation is mediated through lowering of intracellular free calcium, by desensitization of contractile proteins to calcium, and by decrease in the contractile state of smooth muscle or in platelet activation. Regulates intracellular calcium levels via several pathways: phosphorylates IRAG1 and inhibits IP3-induced Ca(2+) release from intracellular stores, phosphorylation of KCNMA1 (BKCa) channels decreases intracellular Ca(2+) levels, which leads to increased opening of this channel. PRKG1 phosphorylates the canonical transient receptor potential channel (TRPC) family which inactivates the associated inward calcium current. Another mode of action of NO/cGMP/PKGI signaling involves PKGI-mediated inactivation of the Ras homolog gene family member A (RhoA). Phosphorylation of RHOA by PRKG1 blocks the action of this protein in myriad processes: regulation of RHOA translocation; decreasing contraction; controlling vesicle trafficking, reduction of myosin light chain phosphorylation resulting in vasorelaxation. Activation of PRKG1 by NO signaling also alters gene expression in a number of tissues. In smooth muscle cells, increased cGMP and PRKG1 activity influence expression of smooth muscle-specific contractile proteins, levels of proteins in the NO/cGMP signaling pathway, down-regulation of the matrix proteins osteopontin and thrombospondin-1 to limit smooth muscle cell migration and phenotype. Regulates vasodilator-stimulated phosphoprotein (VASP) functions in platelets and smooth muscle. In Mus musculus (Mouse), this protein is cGMP-dependent protein kinase 1 (Prkg1).